The primary structure comprises 71 residues: MERLSEDDPAAQALEYRHDASSVQHPAYEEGQTCLNCLLYTDASAQDWGPCSVFPGKLVSANGWCTAWVAR.

The [4Fe-4S] cluster site is built by Cys-34, Cys-37, Cys-51, and Cys-65.

It belongs to the high-potential iron-sulfur protein (HiPIP) family. Homodimer.

Functionally, specific class of high-redox-potential 4Fe-4S ferredoxins. Functions in anaerobic electron transport in most purple and in some other photosynthetic bacteria and in at least one genus (Paracoccus) of halophilic, denitrifying bacteria. The chain is High-potential iron-sulfur protein isozyme 2 (hip2) from Ectothiorhodospira shaposhnikovii (Ectothiorhodospira vacuolata).